The following is a 305-amino-acid chain: Phosphatidate cytidylyltransferase (305 aa).

The next 7 membrane-spanning stretches (helical) occupy residues 24–44 (LLVF…AFIV), 97–117 (PEHV…HLVF), 124–144 (LGPI…SVPI), 151–171 (LYGF…IFLI), 202–222 (TVVG…IFYS), 232–252 (IAMP…GFFG), and 277–297 (MLDV…ILLI).

Belongs to the CDS family.

The protein localises to the cell membrane. The enzyme catalyses a 1,2-diacyl-sn-glycero-3-phosphate + CTP + H(+) = a CDP-1,2-diacyl-sn-glycerol + diphosphate. It functions in the pathway phospholipid metabolism; CDP-diacylglycerol biosynthesis; CDP-diacylglycerol from sn-glycerol 3-phosphate: step 3/3. This Chlamydia muridarum (strain MoPn / Nigg) protein is Phosphatidate cytidylyltransferase (cdsA).